The chain runs to 194 residues: Adenylate kinase isoenzyme 1 (194 aa).

N-acetylmethionine is present on Met1. 18-23 lines the ATP pocket; the sequence is GSGKGT. A Phosphoserine modification is found at Ser38. An NMP region spans residues 38 to 67; it reads STGDLLRAEVSSGSARGKMLSEIMEKGQLV. AMP contacts are provided by residues Thr39, Arg44, 65–67, 94–97, and Gln101; these read QLV and GYPR. Positions 131–141 are LID; sequence KRGETSGRVDD. ATP is bound at residue Arg132. 2 residues coordinate AMP: Arg138 and Arg149. Gly177 provides a ligand contact to ATP.

This sequence belongs to the adenylate kinase family. AK1 subfamily. As to quaternary structure, monomer. The cofactor is Mg(2+).

The protein resides in the cytoplasm. It catalyses the reaction a ribonucleoside 5'-phosphate + ATP = a ribonucleoside 5'-diphosphate + ADP. The enzyme catalyses AMP + ATP = 2 ADP. It carries out the reaction dAMP + ATP = dADP + ADP. The catalysed reaction is dATP + AMP = dADP + ADP. It catalyses the reaction dAMP + dATP = 2 dADP. The enzyme catalyses a 2'-deoxyribonucleoside 5'-diphosphate + ATP = a 2'-deoxyribonucleoside 5'-triphosphate + ADP. It carries out the reaction a ribonucleoside 5'-diphosphate + ATP = a ribonucleoside 5'-triphosphate + ADP. The catalysed reaction is CDP + GTP = CTP + GDP. It catalyses the reaction GDP + ATP = GTP + ADP. The enzyme catalyses UDP + ATP = UTP + ADP. It carries out the reaction GTP + UDP = UTP + GDP. The catalysed reaction is dTDP + GTP = dTTP + GDP. It catalyses the reaction dCDP + GTP = dCTP + GDP. The enzyme catalyses dGDP + ATP = dGTP + ADP. It carries out the reaction dADP + GTP = dATP + GDP. The catalysed reaction is thiamine diphosphate + ADP = thiamine triphosphate + AMP. In terms of biological role, catalyzes the reversible transfer of the terminal phosphate group between ATP and AMP. Also displays broad nucleoside diphosphate kinase activity. Plays an important role in cellular energy homeostasis and in adenine nucleotide metabolism. Also catalyzes at a very low rate the synthesis of thiamine triphosphate (ThTP) from thiamine diphosphate (ThDP) and ADP. This chain is Adenylate kinase isoenzyme 1, found in Bos taurus (Bovine).